Consider the following 226-residue polypeptide: Thiocyanate methyltransferase 1 (226 aa).

4 residues coordinate S-adenosyl-L-methionine: W35, W39, W46, and G73. A Phosphoserine modification is found at S85. Residues D94, 122 to 123 (DF), and Y138 contribute to the S-adenosyl-L-methionine site.

It belongs to the class I-like SAM-binding methyltransferase superfamily. TPMT family. As to expression, ubiquitous.

The catalysed reaction is thiocyanate + S-adenosyl-L-methionine = methyl thiocyanate + S-adenosyl-L-homocysteine. Functionally, S-adenosyl-L-methionine-dependent methyltransferase. Probably involved in glucosinolate metabolism and defense against phytopathogens. Highly reactive to thiocyanate (NCS(-)) derived from myrosinase-mediated hydrolysis of glucosinolates upon tissue damage. Also accepts halid ions as substrates with a lower affinity. This is Thiocyanate methyltransferase 1 (TMT1) from Brassica oleracea (Wild cabbage).